The chain runs to 326 residues: Protein MICROTUBULE BINDING PROTEIN 2C (326 aa).

Polar residues-rich tracts occupy residues 1–15 (MYEQQQHFMDLQSDS) and 34–46 (PHQSAAGTNSGNE). 2 disordered regions span residues 1 to 46 (MYEQ…SGNE) and 71 to 132 (ERSS…KALA). Residues 132 to 183 (AGAEKEEMSRLREQVNDLQTKLSEKEEVLKSMEMSKNQVNEIQEKLEATNRL) are a coiled coil.

Belongs to the microtubule binding protein 2C family. As to quaternary structure, interacts with STM. Expressed in seedlings, roots, flowers and developing ovules.

The protein localises to the cytoplasm. The protein resides in the cytoskeleton. Prevents homeodomain proteins (e.g. STM) association to plasmodesmata and, consequently, cell-to-cell transport. Binds to RNA. Alters STM RNA binding capacity. Regulates cytoskeleton (e.g. actin) organization that determinates cell shape. Regulates stomata patterning and drought tolerance. Involved in restricting tobamovirus (e.g. oilseed rape mosaic virus) infectivity, probably by interfering with cell-to-cell virus movement. This chain is Protein MICROTUBULE BINDING PROTEIN 2C, found in Arabidopsis thaliana (Mouse-ear cress).